A 286-amino-acid chain; its full sequence is Large ribosomal subunit protein uL4m (286 aa).

The transit peptide at 1 to 26 (MTIKRNLVKTLQSIRYQATTATAHAE) directs the protein to the mitochondrion. A disordered region spans residues 85-132 (RRVGASNPPGRSENGFSRRKLMPQKGSGRARVGDANSPTRHNGGRALA).

Belongs to the universal ribosomal protein uL4 family. As to quaternary structure, component of the mitochondrial large ribosomal subunit (mt-LSU). Mature yeast 74S mitochondrial ribosomes consist of a small (37S) and a large (54S) subunit. The 37S small subunit contains a 15S ribosomal RNA (15S mt-rRNA) and 34 different proteins. The 54S large subunit contains a 21S rRNA (21S mt-rRNA) and 46 different proteins.

Its subcellular location is the mitochondrion. Its function is as follows. Component of the mitochondrial ribosome (mitoribosome), a dedicated translation machinery responsible for the synthesis of mitochondrial genome-encoded proteins, including at least some of the essential transmembrane subunits of the mitochondrial respiratory chain. The mitoribosomes are attached to the mitochondrial inner membrane and translation products are cotranslationally integrated into the membrane. The protein is Large ribosomal subunit protein uL4m (YML6) of Saccharomyces cerevisiae (strain ATCC 204508 / S288c) (Baker's yeast).